The following is a 392-amino-acid chain: Tyrosine--tRNA ligase (392 aa).

Residues 41-50 carry the 'HIGH' region motif; sequence PTAPDLHLGH. Residues 225-229 carry the 'KMSKS' region motif; that stretch reads KMSKS. Lysine 228 contributes to the ATP binding site. Residues 330–390 enclose the S4 RNA-binding domain; it reads LRAVDFLVKI…VGKKKFYRVV (61 aa).

The protein belongs to the class-I aminoacyl-tRNA synthetase family. TyrS type 2 subfamily. Homodimer.

It is found in the cytoplasm. It catalyses the reaction tRNA(Tyr) + L-tyrosine + ATP = L-tyrosyl-tRNA(Tyr) + AMP + diphosphate + H(+). Functionally, catalyzes the attachment of tyrosine to tRNA(Tyr) in a two-step reaction: tyrosine is first activated by ATP to form Tyr-AMP and then transferred to the acceptor end of tRNA(Tyr). This Aquifex aeolicus (strain VF5) protein is Tyrosine--tRNA ligase.